A 180-amino-acid chain; its full sequence is uncharacterized protein (180 aa).

This is an uncharacterized protein from Clostridium acetobutylicum (strain ATCC 824 / DSM 792 / JCM 1419 / IAM 19013 / LMG 5710 / NBRC 13948 / NRRL B-527 / VKM B-1787 / 2291 / W).